The following is a 326-amino-acid chain: MAGLEDTTDLRLPSASEPIKNIVLVGRTGNGKSATGNSLIGKQVFRSETRATGVTMKCETCVAVTPCGTGINVIDTPGLFDLSVSAEYLSQEIINCLVLAEDGLHAVVLVLSVRTRISQEEEATLNTLQVIFGSQIIDYLVVLFTGGDELEANNMTLDDYLSKGCPEFLKTVLRLCGGRRILFDNRTTDEGKKVKQVQELLAHVAAIEKSTSGIPFTDEMHRKIQKEAETLREQQKEVESKDLAAAEIEKWKKHYQTEHDKNMNMMAEMLGNRLREDSERQEKMLLALRDNLEISQRQNKLNELTDNEPDLIHCGVSLRRMPCNML.

Positions 17–225 constitute an AIG1-type G domain; the sequence is EPIKNIVLVG…FTDEMHRKIQ (209 aa). The segment at 26-33 is G1; that stretch reads GRTGNGKS. Residues 26 to 34 and serine 47 contribute to the GTP site; that span reads GRTGNGKSA. Positions 53–57 are G2; it reads GVTMK. Residues 75–78 form a G3 region; the sequence is DTPG. A G4 region spans residues 145 to 148; that stretch reads TGGD. The interval 184-186 is G5; it reads DNR. Position 185 (asparagine 185) interacts with GTP. Residues 217–241 are a coiled coil; sequence TDEMHRKIQKEAETLREQQKEVESK.

It belongs to the TRAFAC class TrmE-Era-EngA-EngB-Septin-like GTPase superfamily. AIG1/Toc34/Toc159-like paraseptin GTPase family. IAN subfamily. As to expression, expressed in radicles of the germinating seeds.

The chain is Immune-associated nucleotide-binding protein 4 from Arabidopsis thaliana (Mouse-ear cress).